The chain runs to 371 residues: Protein NDRG2 (371 aa).

The tract at residues 1-22 is disordered; that stretch reads MAELQEVQITEEKPLLPGQTPE. Ala2 is subject to N-acetylalanine. Residue Thr20 is modified to Phosphothreonine. A phosphoserine mark is found at Ser326 and Ser328. Phosphothreonine is present on Thr330. Ser332 carries the phosphoserine modification. Thr334 is subject to Phosphothreonine. Residues 334–371 form a disordered region; the sequence is TSAASIDGSRSRSRTLSQSSESGTLPSGPPGHTMEVSC. Ser335, Ser338, and Ser344 each carry phosphoserine. Residue Thr348 is modified to Phosphothreonine. Ser350, Ser352, Ser353, and Ser355 each carry phosphoserine. Thr357 bears the Phosphothreonine mark. Position 370 is a phosphoserine (Ser370).

The protein belongs to the NDRG family. In terms of tissue distribution, broadly expressed, with highest levels in heart, liver, skeletal muscle and aorta.

It is found in the cytoplasm. It localises to the perinuclear region. Its subcellular location is the cell projection. The protein resides in the growth cone. Its function is as follows. Contributes to the regulation of the Wnt signaling pathway. Down-regulates CTNNB1-mediated transcriptional activation of target genes, such as CCND1, and may thereby act as tumor suppressor. May be involved in dendritic cell and neuron differentiation. In Rattus norvegicus (Rat), this protein is Protein NDRG2 (Ndrg2).